We begin with the raw amino-acid sequence, 152 residues long: Transcriptional regulator MraZ (152 aa).

2 consecutive SpoVT-AbrB domains span residues 5–52 and 81–124; these read ATLV…PLPE and ASEC…DETT.

It belongs to the MraZ family. As to quaternary structure, forms oligomers.

Its subcellular location is the cytoplasm. The protein resides in the nucleoid. Functionally, negatively regulates its own expression and that of the subsequent genes in the proximal part of the division and cell wall (dcw) gene cluster. Acts by binding directly to DNA. May also regulate the expression of genes outside the dcw cluster. The chain is Transcriptional regulator MraZ from Salmonella gallinarum (strain 287/91 / NCTC 13346).